The chain runs to 1899 residues: Protein TIC 214 (1899 aa).

A run of 6 helical transmembrane segments spans residues 23–43, 64–84, 87–107, 124–144, 172–192, and 217–237; these read VVVG…SYLF, FITG…HLAL, PHTI…WNNH, LSIQ…LFIL, VGWL…LVCI, and WTAR…LGVH. 2 disordered regions span residues 256–280 and 1581–1619; these read EQKK…TKKE and PKDY…GLDL. The segment covering 269–280 has biased composition (basic and acidic residues); sequence EKTFETKETKKE.

Belongs to the TIC214 family. In terms of assembly, part of the Tic complex.

It is found in the plastid. It localises to the chloroplast inner membrane. Functionally, involved in protein precursor import into chloroplasts. May be part of an intermediate translocation complex acting as a protein-conducting channel at the inner envelope. This chain is Protein TIC 214, found in Ceratophyllum demersum (Rigid hornwort).